The primary structure comprises 215 residues: Pyrrolidone-carboxylate peptidase (215 aa).

Residues glutamate 78, cysteine 141, and histidine 165 contribute to the active site.

This sequence belongs to the peptidase C15 family. In terms of assembly, homotetramer.

The protein resides in the cytoplasm. The catalysed reaction is Release of an N-terminal pyroglutamyl group from a polypeptide, the second amino acid generally not being Pro.. Removes 5-oxoproline from various penultimate amino acid residues except L-proline. This Streptococcus pyogenes serotype M18 (strain MGAS8232) protein is Pyrrolidone-carboxylate peptidase.